A 388-amino-acid chain; its full sequence is Deoxyguanosinetriphosphate triphosphohydrolase-like protein (388 aa).

Positions 1–32 are disordered; sequence MSVGMAAPRAPYSCDPDRSRGRLFAEPPSRTR. The region spanning 69-205 is the HD domain; that stretch reads RLTHSLEVAQ…AALADDIAYD (137 aa).

Belongs to the dGTPase family. Type 2 subfamily.

The chain is Deoxyguanosinetriphosphate triphosphohydrolase-like protein from Bradyrhizobium sp. (strain ORS 278).